Here is a 164-residue protein sequence, read N- to C-terminus: Phosphopantetheine adenylyltransferase (164 aa).

A substrate-binding site is contributed by serine 10. ATP-binding positions include 10–11 (SF) and histidine 18. 3 residues coordinate substrate: lysine 42, leucine 74, and arginine 88. ATP-binding positions include 89-91 (GLR), glutamate 99, and 124-130 (YSFLSSS).

Belongs to the bacterial CoaD family. Homohexamer. Mg(2+) is required as a cofactor.

Its subcellular location is the cytoplasm. It carries out the reaction (R)-4'-phosphopantetheine + ATP + H(+) = 3'-dephospho-CoA + diphosphate. It participates in cofactor biosynthesis; coenzyme A biosynthesis; CoA from (R)-pantothenate: step 4/5. Reversibly transfers an adenylyl group from ATP to 4'-phosphopantetheine, yielding dephospho-CoA (dPCoA) and pyrophosphate. In Exiguobacterium sp. (strain ATCC BAA-1283 / AT1b), this protein is Phosphopantetheine adenylyltransferase.